A 195-amino-acid chain; its full sequence is L-rhamnose-binding lectin CSL2 (195 aa).

SUEL-type lectin domains lie at 1–97 (TRVV…YTCL) and 104–195 (TCEG…YTCG).

L-rhamnose binding lectin. Has hemagglutinating activity towards rabbit erythrocytes and human type B erythrocytes. Hemagglutinating activity is inhibited by smooth-type lipopolysaccharide (LPS) from S.flexneri 1A and E.coli K12, but not by rough-type LPS from S.flexneri, E.coli K12 and E.coli EH100. Agglutinates E.coli K12 and B.subtilis. The chain is L-rhamnose-binding lectin CSL2 from Oncorhynchus keta (Chum salmon).